We begin with the raw amino-acid sequence, 447 residues long: Exodeoxyribonuclease 7 large subunit (447 aa).

This sequence belongs to the XseA family. In terms of assembly, heterooligomer composed of large and small subunits.

It localises to the cytoplasm. The enzyme catalyses Exonucleolytic cleavage in either 5'- to 3'- or 3'- to 5'-direction to yield nucleoside 5'-phosphates.. In terms of biological role, bidirectionally degrades single-stranded DNA into large acid-insoluble oligonucleotides, which are then degraded further into small acid-soluble oligonucleotides. This is Exodeoxyribonuclease 7 large subunit from Geobacter sulfurreducens (strain ATCC 51573 / DSM 12127 / PCA).